The following is a 208-amino-acid chain: Negative modulator of initiation of replication (208 aa).

The interval 115 to 116 (AV) is interaction with DNA.

It belongs to the SeqA family. Homodimer. Polymerizes to form helical filaments.

Its subcellular location is the cytoplasm. Its function is as follows. Negative regulator of replication initiation, which contributes to regulation of DNA replication and ensures that replication initiation occurs exactly once per chromosome per cell cycle. Binds to pairs of hemimethylated GATC sequences in the oriC region, thus preventing assembly of replication proteins and re-initiation at newly replicated origins. Repression is relieved when the region becomes fully methylated. This Shewanella frigidimarina (strain NCIMB 400) protein is Negative modulator of initiation of replication.